The sequence spans 445 residues: Lipoyl synthase, mitochondrial (445 aa).

A mitochondrion-targeting transit peptide spans 1–40 (MRPGSWRVITHYGFTGPIQRLQAPLRRSLARAAALSTRSY). Residues 42–71 (TIPSAPSSQPTSQESSPAASASASASAPAT) are compositionally biased toward low complexity. The disordered stretch occupies residues 42-77 (TIPSAPSSQPTSQESSPAASASASASAPATKPRPTY). Residues cysteine 157, cysteine 162, cysteine 168, cysteine 188, cysteine 192, cysteine 195, and serine 405 each coordinate [4Fe-4S] cluster. Residues 171-394 (GSNKAAATAT…RQRALDMGFL (224 aa)) enclose the Radical SAM core domain.

It belongs to the radical SAM superfamily. Lipoyl synthase family. [4Fe-4S] cluster serves as cofactor.

The protein resides in the mitochondrion. The enzyme catalyses [[Fe-S] cluster scaffold protein carrying a second [4Fe-4S](2+) cluster] + N(6)-octanoyl-L-lysyl-[protein] + 2 oxidized [2Fe-2S]-[ferredoxin] + 2 S-adenosyl-L-methionine + 4 H(+) = [[Fe-S] cluster scaffold protein] + N(6)-[(R)-dihydrolipoyl]-L-lysyl-[protein] + 4 Fe(3+) + 2 hydrogen sulfide + 2 5'-deoxyadenosine + 2 L-methionine + 2 reduced [2Fe-2S]-[ferredoxin]. The protein operates within protein modification; protein lipoylation via endogenous pathway; protein N(6)-(lipoyl)lysine from octanoyl-[acyl-carrier-protein]: step 2/2. In terms of biological role, catalyzes the radical-mediated insertion of two sulfur atoms into the C-6 and C-8 positions of the octanoyl moiety bound to the lipoyl domains of lipoate-dependent enzymes, thereby converting the octanoylated domains into lipoylated derivatives. The protein is Lipoyl synthase, mitochondrial of Sordaria macrospora (strain ATCC MYA-333 / DSM 997 / K(L3346) / K-hell).